A 160-amino-acid polypeptide reads, in one-letter code: Small ribosomal subunit protein uS9 (160 aa).

It belongs to the universal ribosomal protein uS9 family.

The protein is Small ribosomal subunit protein uS9 of Xanthobacter autotrophicus (strain ATCC BAA-1158 / Py2).